We begin with the raw amino-acid sequence, 109 residues long: Flagellar hook-basal body complex protein FliE (109 aa).

The segment at 1–38 (MQAIHNDKSLLSPFSELNTDNRTKREESGSTFKEQKGG) is disordered. The span at 19–38 (TDNRTKREESGSTFKEQKGG) shows a compositional bias: basic and acidic residues.

The protein belongs to the FliE family.

It localises to the bacterial flagellum basal body. This chain is Flagellar hook-basal body complex protein FliE, found in Helicobacter pylori (strain P12).